Here is a 255-residue protein sequence, read N- to C-terminus: Putative gene 39 protein (255 aa).

This is Putative gene 39 protein (39) from Bacillus phage SP01 (Bacteriophage SP01).